The primary structure comprises 377 residues: N5-carboxyaminoimidazole ribonucleotide synthase (377 aa).

Residues Arg93, Lys133, 138–144 (GYDGRGQ), 175–178 (EEFV), Glu183, His206, and 257–258 (NE) each bind ATP. The ATP-grasp domain occupies 97–287 (KTLLDHAGVR…QFENHLRAVC (191 aa)).

The protein belongs to the PurK/PurT family. As to quaternary structure, homodimer.

It catalyses the reaction 5-amino-1-(5-phospho-beta-D-ribosyl)imidazole + hydrogencarbonate + ATP = 5-carboxyamino-1-(5-phospho-D-ribosyl)imidazole + ADP + phosphate + 2 H(+). Its pathway is purine metabolism; IMP biosynthesis via de novo pathway; 5-amino-1-(5-phospho-D-ribosyl)imidazole-4-carboxylate from 5-amino-1-(5-phospho-D-ribosyl)imidazole (N5-CAIR route): step 1/2. Its function is as follows. Catalyzes the ATP-dependent conversion of 5-aminoimidazole ribonucleotide (AIR) and HCO(3)(-) to N5-carboxyaminoimidazole ribonucleotide (N5-CAIR). The polypeptide is N5-carboxyaminoimidazole ribonucleotide synthase (Vibrio vulnificus (strain YJ016)).